Reading from the N-terminus, the 273-residue chain is Bis(5'-nucleosyl)-tetraphosphatase, symmetrical (273 aa).

The protein belongs to the Ap4A hydrolase family.

The enzyme catalyses P(1),P(4)-bis(5'-adenosyl) tetraphosphate + H2O = 2 ADP + 2 H(+). In terms of biological role, hydrolyzes diadenosine 5',5'''-P1,P4-tetraphosphate to yield ADP. In Aromatoleum aromaticum (strain DSM 19018 / LMG 30748 / EbN1) (Azoarcus sp. (strain EbN1)), this protein is Bis(5'-nucleosyl)-tetraphosphatase, symmetrical.